The primary structure comprises 156 residues: UPF0587 protein (156 aa).

Residues cysteine 32, cysteine 35, cysteine 64, and cysteine 67 each contribute to the Zn(2+) site.

This sequence belongs to the UPF0587 family.

The chain is UPF0587 protein from Dictyostelium discoideum (Social amoeba).